Consider the following 127-residue polypeptide: Small ribosomal subunit protein uS11 (127 aa).

It belongs to the universal ribosomal protein uS11 family. In terms of assembly, part of the 30S ribosomal subunit. Interacts with proteins S7 and S18. Binds to IF-3.

Its function is as follows. Located on the platform of the 30S subunit, it bridges several disparate RNA helices of the 16S rRNA. Forms part of the Shine-Dalgarno cleft in the 70S ribosome. In Rhodopirellula baltica (strain DSM 10527 / NCIMB 13988 / SH1), this protein is Small ribosomal subunit protein uS11.